We begin with the raw amino-acid sequence, 771 residues long: Carnitine O-palmitoyltransferase 1, muscle isoform (771 aa).

The Cytoplasmic segment spans residues 1-47 (MAEAHQAVAFQFTVTPEGVDFQLSREVLKHIYLSVIRSWKKRLIRIK). Residues 48–73 (NGILRGVYPGSPTSWLVVVMATAGSS) form a helical membrane-spanning segment. Residues 74-101 (YYNVDISMGLVYYIQRWLPEGRPYRTPY) lie on the Mitochondrial intermembrane side of the membrane. A helical transmembrane segment spans residues 102–121 (TRTLFSMAIFSTGVWMMGIF). Residues 122-771 (FFRQTLKLLL…NLFQVPKADG (650 aa)) are Cytoplasmic-facing. His472 acts as the Proton acceptor in catalysis. 554–566 (GKGLIKKCRTSPD) is a binding site for CoA. 2 residues coordinate (R)-carnitine: Tyr588 and Thr601.

This sequence belongs to the carnitine/choline acetyltransferase family.

It is found in the mitochondrion outer membrane. It carries out the reaction (R)-carnitine + hexadecanoyl-CoA = O-hexadecanoyl-(R)-carnitine + CoA. The protein operates within lipid metabolism; fatty acid beta-oxidation. Functionally, catalyzes the transfer of the acyl group of long-chain fatty acid-CoA conjugates onto carnitine, an essential step for the mitochondrial uptake of long-chain fatty acids and their subsequent beta-oxidation in the mitochondrion. This Bos taurus (Bovine) protein is Carnitine O-palmitoyltransferase 1, muscle isoform (CPT1B).